A 208-amino-acid polypeptide reads, in one-letter code: Molybdenum cofactor guanylyltransferase (208 aa).

Residues 10-12, lysine 23, aspartate 69, and aspartate 103 contribute to the GTP site; that span reads LAG. Aspartate 103 provides a ligand contact to Mg(2+).

This sequence belongs to the MobA family. As to quaternary structure, monomer. The cofactor is Mg(2+).

The protein resides in the cytoplasm. It catalyses the reaction Mo-molybdopterin + GTP + H(+) = Mo-molybdopterin guanine dinucleotide + diphosphate. Transfers a GMP moiety from GTP to Mo-molybdopterin (Mo-MPT) cofactor (Moco or molybdenum cofactor) to form Mo-molybdopterin guanine dinucleotide (Mo-MGD) cofactor. This is Molybdenum cofactor guanylyltransferase from Mesorhizobium japonicum (strain LMG 29417 / CECT 9101 / MAFF 303099) (Mesorhizobium loti (strain MAFF 303099)).